Consider the following 1020-residue polypeptide: FERM domain-containing protein 4A (1020 aa).

The FERM domain occupies 5 to 307 (RRCQVHLLDD…SQHQFYLDRK (303 aa)). Positions 343–405 (KGKIISGSSG…RLCLREAELT (63 aa)) are necessary for interaction with CYTH1. Residues 351–367 (SGSLLSSGSQESDSSQS) are compositionally biased toward low complexity. The segment at 351–371 (SGSLLSSGSQESDSSQSAKKD) is disordered. A coiled-coil region spans residues 367-401 (SAKKDMLAALKSRQEALEETLRQRLEELKRLCLRE). Position 515 is a phosphoserine (Ser-515). The disordered stretch occupies residues 538 to 665 (DEDSQVTSTI…MPSTPDLRVR (128 aa)). Over residues 542-551 (QVTSTISPLQ) the composition is skewed to polar residues. Residues 556 to 572 (GLPPRPPSSHNRPPPPQ) are compositionally biased toward pro residues. A necessary for tight junction and adherens junction localization; Requires for interaction with PARD3 region spans residues 565 to 920 (HNRPPPPQSL…QWYQRSTASH (356 aa)). Phosphoserine occurs at positions 590 and 601. Positions 609–624 (VKKRSSHGHSSSHKRF) are enriched in basic residues. Polar residues predominate over residues 626–658 (STGSCTEAGVSSSLQNSPIRSLPHWNSQSSMPS). Residues Ser-666 and Ser-696 each carry the phosphoserine modification. Disordered regions lie at residues 698–741 (ESQG…HSSS) and 757–810 (AEDS…QSQP). Low complexity predominate over residues 773–796 (RAAGALGSASSGSMPNLAARSGAA). Ser-785, Ser-854, and Ser-882 each carry phosphoserine. 2 disordered regions span residues 862–949 (KESW…STFV) and 961–1020 (CKAT…STDE). Basic and acidic residues predominate over residues 893–910 (DGAHDKGSGRAAVSDELR). Residues 927–947 (SHTSSTSSDSGSQYSTSSQST) show a composition bias toward low complexity. Polar residues-rich tracts occupy residues 967-981 (ALPQ…SSEI), 994-1004 (TWQTGEATENS), and 1011-1020 (ESPTHQSTDE).

In terms of assembly, interacts (via coiled-coil domain) with CYTH1 (via coiled-coil domain). Interacts with PARD3 (via coiled-coil domain). Found in a complex with PARD3, CYTH1 and FRMD4A. Interacts with CYTH2. Interacts with CYTH3.

The protein resides in the cytoplasm. Its subcellular location is the cytoskeleton. The protein localises to the cell junction. It localises to the adherens junction. It is found in the tight junction. In terms of biological role, scaffolding protein that regulates epithelial cell polarity by connecting ARF6 activation with the PAR3 complex. Plays a redundant role with FRMD4B in epithelial polarization. May regulate MAPT secretion by activating ARF6-signaling. The chain is FERM domain-containing protein 4A (Frmd4a) from Mus musculus (Mouse).